The chain runs to 1192 residues: DNA topoisomerase 2 (1192 aa).

Residues Asn64, Asn95, and 142–149 (GTNGVGLK) contribute to the ATP site. Mg(2+)-binding residues include Glu438, Asp539, and Asp541. The region spanning 707–1174 (IPNFLDGMTR…PGASVWLEEI (468 aa)) is the Topo IIA-type catalytic domain. The active-site O-(5'-phospho-DNA)-tyrosine intermediate is Tyr800.

The protein belongs to the type II topoisomerase family. It depends on Mg(2+) as a cofactor. Mn(2+) serves as cofactor. Ca(2+) is required as a cofactor.

It is found in the host cytoplasm. It catalyses the reaction ATP-dependent breakage, passage and rejoining of double-stranded DNA.. Functionally, type II topoisomerase. Processively relaxes supercoiled DNA. Displays DNA-supercoiling activity only when associated with the viral histone-like protein. The protein is DNA topoisomerase 2 of African swine fever virus (isolate Tick/South Africa/Pretoriuskop Pr4/1996) (ASFV).